The primary structure comprises 198 residues: 8-oxoguanine DNA glycosylase/AP lyase (198 aa).

Catalysis depends on residues Lys122 and Asp140.

The protein belongs to the type-2 OGG1 family. Monomer.

It catalyses the reaction 2'-deoxyribonucleotide-(2'-deoxyribose 5'-phosphate)-2'-deoxyribonucleotide-DNA = a 3'-end 2'-deoxyribonucleotide-(2,3-dehydro-2,3-deoxyribose 5'-phosphate)-DNA + a 5'-end 5'-phospho-2'-deoxyribonucleoside-DNA + H(+). In terms of biological role, catalyzes the excision of an oxidatively damaged form of guanine (7,8-dihydro-8-oxoguanine = 8-oxoG) from DNA. Also cleaves the DNA backbone at apurinic/apyrimidinic sites (AP sites). Efficiently cleaves oligomers containing 8-oxoG:C and 8-oxoG:G base pairs, and is less effective on oligomers containing 8-oxoG:T and 8-oxoG:A mispairs. This is 8-oxoguanine DNA glycosylase/AP lyase from Archaeoglobus fulgidus (strain ATCC 49558 / DSM 4304 / JCM 9628 / NBRC 100126 / VC-16).